Here is a 491-residue protein sequence, read N- to C-terminus: Ketol-acid reductoisomerase (NADP(+)) (491 aa).

The KARI N-terminal Rossmann domain occupies 14–208 (LKHLGKCRFM…GSHRAGVLES (195 aa)). NADP(+) contacts are provided by residues 45–48 (CGSQ), arginine 68, and serine 78. Histidine 132 is an active-site residue. Residue glycine 158 coordinates NADP(+). 2 consecutive KARI C-terminal knotted domains span residues 209–344 (SFVA…QAPN) and 345–485 (YQQE…MQNM). Aspartate 217, glutamate 221, glutamate 389, and glutamate 393 together coordinate Mg(2+). Residue serine 414 coordinates substrate.

It belongs to the ketol-acid reductoisomerase family. It depends on Mg(2+) as a cofactor.

It carries out the reaction (2R)-2,3-dihydroxy-3-methylbutanoate + NADP(+) = (2S)-2-acetolactate + NADPH + H(+). The enzyme catalyses (2R,3R)-2,3-dihydroxy-3-methylpentanoate + NADP(+) = (S)-2-ethyl-2-hydroxy-3-oxobutanoate + NADPH + H(+). It participates in amino-acid biosynthesis; L-isoleucine biosynthesis; L-isoleucine from 2-oxobutanoate: step 2/4. It functions in the pathway amino-acid biosynthesis; L-valine biosynthesis; L-valine from pyruvate: step 2/4. Functionally, involved in the biosynthesis of branched-chain amino acids (BCAA). Catalyzes an alkyl-migration followed by a ketol-acid reduction of (S)-2-acetolactate (S2AL) to yield (R)-2,3-dihydroxy-isovalerate. In the isomerase reaction, S2AL is rearranged via a Mg-dependent methyl migration to produce 3-hydroxy-3-methyl-2-ketobutyrate (HMKB). In the reductase reaction, this 2-ketoacid undergoes a metal-dependent reduction by NADPH to yield (R)-2,3-dihydroxy-isovalerate. In Blochmanniella pennsylvanica (strain BPEN), this protein is Ketol-acid reductoisomerase (NADP(+)).